The chain runs to 96 residues: Neutrophil defensin 8 (96 aa).

A signal peptide spans 1–19 (MRTLVILAAILLVALQAQA). Residues 20–66 (EPLQARTDEATAAQEQIPTDNPEVVVSLAWDESLAPKDSVPGLRKNM) constitute a propeptide that is removed on maturation. Cystine bridges form between cysteine 68-cysteine 96, cysteine 70-cysteine 85, and cysteine 75-cysteine 95.

Belongs to the alpha-defensin family.

It is found in the secreted. Functionally, probable antibiotic and antifungal activity. In Macaca mulatta (Rhesus macaque), this protein is Neutrophil defensin 8.